A 299-amino-acid polypeptide reads, in one-letter code: Mitochondrial 2-oxodicarboxylate carrier (299 aa).

Solcar repeat units lie at residues Arg11–Leu100, Ser107–Met196, and Leu205–Trp294. The next 6 helical transmembrane spans lie at Ile17–Val37, Phe70–Val89, Ala113–Val133, Gly167–Phe187, Leu205–Asn225, and Leu277–Glu297.

The protein belongs to the mitochondrial carrier (TC 2.A.29) family. In terms of tissue distribution, expressed in placenta, gall bladder and colon.

It localises to the mitochondrion inner membrane. It catalyses the reaction 2-oxoadipate(in) + 2-oxoglutarate(out) = 2-oxoadipate(out) + 2-oxoglutarate(in). The catalysed reaction is hexanedioate(in) + 2-oxoglutarate(out) = hexanedioate(out) + 2-oxoglutarate(in). The enzyme catalyses L-2-aminoadipate(in) + 2-oxoglutarate(out) = L-2-aminoadipate(out) + 2-oxoglutarate(in). It carries out the reaction glutarate(in) + 2-oxoglutarate(out) = glutarate(out) + 2-oxoglutarate(in). It catalyses the reaction 2-oxoheptanedioate(in) + 2-oxoglutarate(out) = 2-oxoheptanedioate(out) + 2-oxoglutarate(in). The catalysed reaction is heptanedioate(in) + 2-oxoglutarate(out) = heptanedioate(out) + 2-oxoglutarate(in). The enzyme catalyses citrate(in) + 2-oxoglutarate(out) = citrate(out) + 2-oxoglutarate(in). Transports dicarboxylates across the inner membranes of mitochondria by a counter-exchange mechanism. Can transport 2-oxoadipate (2-oxohexanedioate), 2-oxoglutarate, adipate (hexanedioate), glutarate, and to a lesser extent, pimelate (heptanedioate), 2-oxopimelate (2-oxoheptanedioate), 2-aminoadipate (2-aminohexanedioate), oxaloacetate, and citrate. Plays a central role in catabolism of lysine, hydroxylysine, and tryptophan, by transporting common metabolite intermediates (such as 2-oxoadipate) into the mitochondria, where it is converted into acetyl-CoA and can enter the citric acid (TCA) cycle. The polypeptide is Mitochondrial 2-oxodicarboxylate carrier (SLC25A21) (Homo sapiens (Human)).